We begin with the raw amino-acid sequence, 576 residues long: Arginine--tRNA ligase (576 aa).

The short motif at 126 to 136 is the 'HIGH' region element; that stretch reads ANPTGPMHIGH.

Belongs to the class-I aminoacyl-tRNA synthetase family. As to quaternary structure, monomer.

The protein localises to the cytoplasm. It carries out the reaction tRNA(Arg) + L-arginine + ATP = L-arginyl-tRNA(Arg) + AMP + diphosphate. This chain is Arginine--tRNA ligase, found in Rickettsia rickettsii (strain Iowa).